The sequence spans 76 residues: MNIGIGVLIFVIGALLGAVAGFFGARAYMKKYFEENPPVNEDMLKAMMMQMGQKPSEKKLNQMMSSMKAQQKRSKK.

A helical membrane pass occupies residues 3–23 (IGIGVLIFVIGALLGAVAGFF). The disordered stretch occupies residues 55–76 (PSEKKLNQMMSSMKAQQKRSKK).

This sequence belongs to the UPF0154 family.

The protein localises to the cell membrane. This Latilactobacillus sakei subsp. sakei (strain 23K) (Lactobacillus sakei subsp. sakei) protein is UPF0154 protein LCA_1273.